Consider the following 199-residue polypeptide: Outer-membrane lipoprotein LolB (199 aa).

Residues 1–28 form the signal peptide; that stretch reads MSVCPAPRSPVRWLHAFTLCLLLAVLAG. Residue cysteine 29 is the site of N-palmitoyl cysteine attachment. Cysteine 29 is lipidated: S-diacylglycerol cysteine.

Belongs to the LolB family. Monomer.

Its subcellular location is the cell outer membrane. Plays a critical role in the incorporation of lipoproteins in the outer membrane after they are released by the LolA protein. The polypeptide is Outer-membrane lipoprotein LolB (Bordetella parapertussis (strain 12822 / ATCC BAA-587 / NCTC 13253)).